The following is a 743-amino-acid chain: Phosphoribosylformylglycinamidine synthase subunit PurL (743 aa).

His50 is an active-site residue. ATP contacts are provided by Tyr53 and Lys92. Glu94 contributes to the Mg(2+) binding site. Substrate contacts are provided by residues 95-98 (SHNH) and Arg117. Residue His96 is the Proton acceptor of the active site. Residue Asp118 participates in Mg(2+) binding. Gln241 contributes to the substrate binding site. A Mg(2+)-binding site is contributed by Asp269. 313–315 (ESQ) is a binding site for substrate. Residues Asp495 and Gly532 each contribute to the ATP site. Position 533 (Asn533) interacts with Mg(2+). Ser535 provides a ligand contact to substrate.

This sequence belongs to the FGAMS family. In terms of assembly, monomer. Part of the FGAM synthase complex composed of 1 PurL, 1 PurQ and 2 PurS subunits.

It localises to the cytoplasm. It catalyses the reaction N(2)-formyl-N(1)-(5-phospho-beta-D-ribosyl)glycinamide + L-glutamine + ATP + H2O = 2-formamido-N(1)-(5-O-phospho-beta-D-ribosyl)acetamidine + L-glutamate + ADP + phosphate + H(+). It functions in the pathway purine metabolism; IMP biosynthesis via de novo pathway; 5-amino-1-(5-phospho-D-ribosyl)imidazole from N(2)-formyl-N(1)-(5-phospho-D-ribosyl)glycinamide: step 1/2. In terms of biological role, part of the phosphoribosylformylglycinamidine synthase complex involved in the purines biosynthetic pathway. Catalyzes the ATP-dependent conversion of formylglycinamide ribonucleotide (FGAR) and glutamine to yield formylglycinamidine ribonucleotide (FGAM) and glutamate. The FGAM synthase complex is composed of three subunits. PurQ produces an ammonia molecule by converting glutamine to glutamate. PurL transfers the ammonia molecule to FGAR to form FGAM in an ATP-dependent manner. PurS interacts with PurQ and PurL and is thought to assist in the transfer of the ammonia molecule from PurQ to PurL. This Rhizobium etli (strain ATCC 51251 / DSM 11541 / JCM 21823 / NBRC 15573 / CFN 42) protein is Phosphoribosylformylglycinamidine synthase subunit PurL.